The chain runs to 182 residues: Probable peptidyl-prolyl cis-trans isomerase A (182 aa).

Residues Gln13 to Ile181 enclose the PPIase cyclophilin-type domain. Residues Thr161 to Ser182 form a disordered region.

The protein belongs to the cyclophilin-type PPIase family.

Its subcellular location is the cytoplasm. It catalyses the reaction [protein]-peptidylproline (omega=180) = [protein]-peptidylproline (omega=0). Its function is as follows. PPIases accelerate the folding of proteins. It catalyzes the cis-trans isomerization of proline imidic peptide bonds in oligopeptides. The protein is Probable peptidyl-prolyl cis-trans isomerase A (ppiA) of Mycobacterium leprae (strain TN).